We begin with the raw amino-acid sequence, 311 residues long: Porphobilinogen deaminase (311 aa).

Position 242 is an S-(dipyrrolylmethanemethyl)cysteine (cysteine 242).

It belongs to the HMBS family. In terms of assembly, monomer. Requires dipyrromethane as cofactor.

The enzyme catalyses 4 porphobilinogen + H2O = hydroxymethylbilane + 4 NH4(+). Its pathway is porphyrin-containing compound metabolism; protoporphyrin-IX biosynthesis; coproporphyrinogen-III from 5-aminolevulinate: step 2/4. Its function is as follows. Tetrapolymerization of the monopyrrole PBG into the hydroxymethylbilane pre-uroporphyrinogen in several discrete steps. This chain is Porphobilinogen deaminase, found in Hahella chejuensis (strain KCTC 2396).